Consider the following 131-residue polypeptide: UPF0102 protein YraN (131 aa).

This sequence belongs to the UPF0102 family.

This is UPF0102 protein YraN from Salmonella typhi.